The chain runs to 461 residues: Gustatory and pheromone receptor 32a (461 aa).

The Cytoplasmic segment spans residues 1-100 (MSPNTWVIEM…YSFFVRGVVH (100 aa)). Residues 101–121 (ALTIFNVYSLFTPISAQLFFS) traverse the membrane as a helical segment. The Extracellular portion of the chain corresponds to 122–127 (YRETDN). Residues 128-148 (VNQWIELLLCILTYTLTVFVC) form a helical membrane-spanning segment. The Cytoplasmic portion of the chain corresponds to 149–180 (AHNTTSMLRIMNEILQLDEEVRRQFGANLSQN). The chain crosses the membrane as a helical span at residues 181–201 (FGFLVKFLVGITACQAYIIVL). Topologically, residues 202–214 (KIYAVQGEITPTS) are extracellular. A helical transmembrane segment spans residues 215–235 (YILLAFYGIQNGLTATYIVFA). Over 236-317 (SALLRIVYIR…YKGINDCCNL (82 aa)) the chain is Cytoplasmic. A helical membrane pass occupies residues 318-338 (ILVSFLGYSFYTVTTNCYNLF). Topologically, residues 339–348 (VQITGKGMVS) are extracellular. A helical transmembrane segment spans residues 349–369 (PNILQWCFAWLCLHVSLLALL). The Cytoplasmic portion of the chain corresponds to 370-414 (SRSCGLTTTEANATSQILARVYAKSKEYQNIIDKFLTKSIKQEVQ). Residues 415–435 (FTAYGFFAIDNSTLFKIFSAV) traverse the membrane as a helical segment. Residues 436 to 461 (TTYLVILIQFKQLEDSKVEDPVPEQT) lie on the Extracellular side of the membrane.

It belongs to the insect chemoreceptor superfamily. Gustatory receptor (GR) family. Gr21a subfamily. Expressed in the adult labellar chemosensory neurons. Expressed in tarsal neurons for male-male courtship suppression. In larvae, is expressed in neurons of the terminal external chemosensory organ, and the dorsal and posterior external chemosensory organs.

The protein resides in the cell membrane. In terms of biological role, gustatory receptor which mediates acceptance or avoidance behavior, depending on its substrates. Required for the response to N,N-Diethyl-meta-toluamide (DEET), the most widely used insect repellent worldwide. Functions as a pheromone receptor for a male inhibitory pheromone and promotes male-male aggression and suppresses male-male courtship. Also promotes preferentially virgin females courting over mated females. This chain is Gustatory and pheromone receptor 32a (Gr32a), found in Drosophila melanogaster (Fruit fly).